The following is a 756-amino-acid chain: Zinc finger and BTB domain-containing protein 49 (756 aa).

Residues 25–91 (CDCMLVVRGV…MYTSRLDLNQ (67 aa)) enclose the BTB domain. 3 disordered regions span residues 176–197 (APSA…GGSC), 226–290 (PSQV…LSEP), and 311–379 (SQQS…PSQA). The segment covering 226–242 (PSQVPATQQPLTRSAST) has biased composition (polar residues). Basic and acidic residues-rich tracts occupy residues 319 to 341 (SHPE…DAVE) and 348 to 365 (AEEK…REEE). 7 C2H2-type zinc fingers span residues 386–408 (YACE…KRSH), 414–436 (FECN…LRRH), 442–464 (YICE…IIIH), 470–492 (HLCD…KKTH), 498–520 (FTCD…RVRH), 526–548 (YSCP…VRTH), and 554–576 (YSCE…KRMH).

It belongs to the krueppel C2H2-type zinc-finger protein family. Interacts with EP300, KAT5/Tip60 and ZBTB17. The interaction with EP300 is direct and leads to synergistic induction of CDKN1A. On the CDKN1A promoter, forms a complex with ZBTB17; this interaction leads to additive CDKN1A transactivation. The interaction with ZBTB17 may block ZBTB17 repressor activity. In terms of tissue distribution, widely expressed, with highest levels in white adipose tissue and kidney, intermediate levels in brain, liver and heart, and lowest levels in spleen, brown adipose tissue and muscle.

Its subcellular location is the cytoplasm. The protein resides in the nucleus. Transcription factor. Inhibits cell proliferation by activating either CDKN1A/p21 transcription or RB1 transcription. In Mus musculus (Mouse), this protein is Zinc finger and BTB domain-containing protein 49 (Zbtb49).